The following is a 1877-amino-acid chain: Neuron navigator 1 (1877 aa).

Position 1 is an N-acetylmethionine (M1). A disordered region spans residues M1 to A59. The segment covering R32–G41 has biased composition (low complexity). S90, S142, and S152 each carry phosphoserine. Residues D114–E225 are disordered. T159 carries the phosphothreonine modification. Phosphoserine is present on residues S194 and S199. Over residues S205–S214 the composition is skewed to low complexity. The stretch at E255–R280 forms a coiled coil. A disordered region spans residues Y294 to S336. Residues S296, S308, S312, S362, and S391 each carry the phosphoserine modification. Residues P301–S315 are compositionally biased toward low complexity. 2 disordered regions span residues K386 to S839 and M892 to L989. Composition is skewed to low complexity over residues D411–D425 and N433–S448. S452, S474, S476, and S490 each carry phosphoserine. A compositionally biased stretch (basic and acidic residues) spans S476–Y486. A compositionally biased stretch (basic and acidic residues) spans E503–K519. A Phosphoserine modification is found at S528. Residue T534 is modified to Phosphothreonine. Position 541 is a phosphoserine (S541). Residue T544 is modified to Phosphothreonine. Residues G555–K566 show a composition bias toward basic and acidic residues. A Phosphothreonine modification is found at T572. The span at A581–K591 shows a compositional bias: basic and acidic residues. Composition is skewed to polar residues over residues G615 to S635 and R645 to A655. At S648 the chain carries Phosphoserine. Residue R688 is modified to Omega-N-methylarginine. Polar residues-rich tracts occupy residues I698–L710 and G724–Q733. The stretch at V731–K756 forms a coiled coil. Phosphoserine occurs at positions 750, 754, 760, 797, and 808. Positions D751–T773 are enriched in polar residues. Residues N805–T818 show a composition bias toward low complexity. The segment covering T902–A913 has biased composition (pro residues). Residue S1000 is modified to Phosphoserine. Position 1006 is a phosphothreonine (T1006). A coiled-coil region spans residues S1072–A1163. T1170 is subject to Phosphothreonine. Disordered stretches follow at residues K1172–D1204, A1244–E1306, L1359–P1383, and K1810–S1843. S1181 carries the post-translational modification Phosphoserine. A compositionally biased stretch (low complexity) spans S1181 to S1200. The span at P1246–A1264 shows a compositional bias: polar residues. The residue at position 1265 (S1265) is a Phosphoserine. Positions S1265 to S1275 are enriched in low complexity. Positions E1303–A1362 form a coiled coil. The span at S1366–P1383 shows a compositional bias: polar residues. The residue at position 1382 (S1382) is a Phosphoserine.

The protein belongs to the Nav/unc-53 family. As to quaternary structure, interacts with tubulin. Broadly expressed at low levels. Expressed at high levels in heart, skeletal muscle and placenta.

Its subcellular location is the cytoplasm. The protein localises to the cytoskeleton. May be involved in neuronal migration. The sequence is that of Neuron navigator 1 (NAV1) from Homo sapiens (Human).